A 322-amino-acid chain; its full sequence is N-acetyl-gamma-glutamyl-phosphate reductase (322 aa).

Residue cysteine 132 is part of the active site.

The protein belongs to the NAGSA dehydrogenase family. Type 1 subfamily.

The protein localises to the cytoplasm. The catalysed reaction is N-acetyl-L-glutamate 5-semialdehyde + phosphate + NADP(+) = N-acetyl-L-glutamyl 5-phosphate + NADPH + H(+). Its pathway is amino-acid biosynthesis; L-arginine biosynthesis; N(2)-acetyl-L-ornithine from L-glutamate: step 3/4. Catalyzes the NADPH-dependent reduction of N-acetyl-5-glutamyl phosphate to yield N-acetyl-L-glutamate 5-semialdehyde. In Phocaeicola vulgatus (strain ATCC 8482 / DSM 1447 / JCM 5826 / CCUG 4940 / NBRC 14291 / NCTC 11154) (Bacteroides vulgatus), this protein is N-acetyl-gamma-glutamyl-phosphate reductase.